We begin with the raw amino-acid sequence, 366 residues long: Chorismate synthase (366 aa).

2 residues coordinate NADP(+): Arg-48 and Arg-54. Residues 125 to 127 (RSS), 241 to 242 (NA), Gly-285, 300 to 304 (KPTSS), and Arg-326 each bind FMN.

It belongs to the chorismate synthase family. As to quaternary structure, homotetramer. FMNH2 is required as a cofactor.

The enzyme catalyses 5-O-(1-carboxyvinyl)-3-phosphoshikimate = chorismate + phosphate. The protein operates within metabolic intermediate biosynthesis; chorismate biosynthesis; chorismate from D-erythrose 4-phosphate and phosphoenolpyruvate: step 7/7. Catalyzes the anti-1,4-elimination of the C-3 phosphate and the C-6 proR hydrogen from 5-enolpyruvylshikimate-3-phosphate (EPSP) to yield chorismate, which is the branch point compound that serves as the starting substrate for the three terminal pathways of aromatic amino acid biosynthesis. This reaction introduces a second double bond into the aromatic ring system. This chain is Chorismate synthase, found in Cereibacter sphaeroides (strain ATCC 17023 / DSM 158 / JCM 6121 / CCUG 31486 / LMG 2827 / NBRC 12203 / NCIMB 8253 / ATH 2.4.1.) (Rhodobacter sphaeroides).